The chain runs to 362 residues: Probable S-adenosylmethionine-dependent methyltransferase At5g37970 (362 aa).

Positions 19, 66, 71, 107, 136, and 137 each coordinate S-adenosyl-L-homocysteine. Asparagine 175, glutamate 261, and phenylalanine 263 together coordinate Mg(2+).

This sequence belongs to the methyltransferase superfamily. Type-7 methyltransferase family. In terms of assembly, homodimer. Requires Mg(2+) as cofactor.

The sequence is that of Probable S-adenosylmethionine-dependent methyltransferase At5g37970 from Arabidopsis thaliana (Mouse-ear cress).